The primary structure comprises 302 residues: Homoserine O-acetyltransferase (302 aa).

Cys142 functions as the Acyl-thioester intermediate in the catalytic mechanism. Substrate is bound by residues Lys163 and Ser192. The active-site Proton acceptor is the His235. The active site involves Glu237. Arg249 serves as a coordination point for substrate.

Belongs to the MetA family.

The protein resides in the cytoplasm. It carries out the reaction L-homoserine + acetyl-CoA = O-acetyl-L-homoserine + CoA. Its pathway is amino-acid biosynthesis; L-methionine biosynthesis via de novo pathway; O-acetyl-L-homoserine from L-homoserine: step 1/1. Transfers an acetyl group from acetyl-CoA to L-homoserine, forming acetyl-L-homoserine. The polypeptide is Homoserine O-acetyltransferase (Bacillus licheniformis (strain ATCC 14580 / DSM 13 / JCM 2505 / CCUG 7422 / NBRC 12200 / NCIMB 9375 / NCTC 10341 / NRRL NRS-1264 / Gibson 46)).